Reading from the N-terminus, the 83-residue chain is Bowman-Birk type proteinase inhibitor (83 aa).

7 cysteine pairs are disulfide-bonded: Cys18–Cys72, Cys19–Cys34, Cys22–Cys68, Cys24–Cys32, Cys42–Cys49, Cys46–Cys61, and Cys51–Cys59.

It belongs to the Bowman-Birk serine protease inhibitor family.

The chain is Bowman-Birk type proteinase inhibitor from Phaseolus lunatus (Lima bean).